A 402-amino-acid polypeptide reads, in one-letter code: Phosphoglycerate kinase (402 aa).

Substrate-binding positions include 24-26, arginine 39, 62-65, arginine 121, and arginine 161; these read DLN and HLGR. ATP is bound by residues lysine 211, glycine 299, glutamate 330, and 359–362; that span reads GGDS.

This sequence belongs to the phosphoglycerate kinase family. As to quaternary structure, monomer.

It localises to the cytoplasm. It catalyses the reaction (2R)-3-phosphoglycerate + ATP = (2R)-3-phospho-glyceroyl phosphate + ADP. The protein operates within carbohydrate degradation; glycolysis; pyruvate from D-glyceraldehyde 3-phosphate: step 2/5. The chain is Phosphoglycerate kinase from Corynebacterium urealyticum (strain ATCC 43042 / DSM 7109).